The sequence spans 221 residues: Probable septum site-determining protein MinC (221 aa).

Belongs to the MinC family. Interacts with MinD and FtsZ.

Cell division inhibitor that blocks the formation of polar Z ring septums. Rapidly oscillates between the poles of the cell to destabilize FtsZ filaments that have formed before they mature into polar Z rings. Prevents FtsZ polymerization. This chain is Probable septum site-determining protein MinC, found in Shewanella frigidimarina (strain NCIMB 400).